The primary structure comprises 307 residues: MRKIIVGSRRSKLALTQSQQFIDQLKRKHPNLEIEIKEIVTKGDQIVNVQLSKVGGKGLFVKEIEQALYDGTIDFAIHSLKDVPSVLPEGLTLGCIPVREDARDAYIAKHHIPLHELKPGSIVGTSSLRRGAQLLDQYPHLEIKWIRGNIDTRLAKLRDEDYDAIILAAAGLNRMGWDKSIVTEYLNPELMLPAIGQGALGIECRSDDAEVLALLKSVHDEETELCTEAERTFLRLMDGSCQVPIAGHATMVGESIEFTGLIMSPDGKEKYKVTHSGGNPIEIGTQVAKAMEQNGAKAIIETLNQDI.

At Cys241 the chain carries S-(dipyrrolylmethanemethyl)cysteine.

It belongs to the HMBS family. In terms of assembly, monomer. Dipyrromethane is required as a cofactor.

The enzyme catalyses 4 porphobilinogen + H2O = hydroxymethylbilane + 4 NH4(+). The protein operates within porphyrin-containing compound metabolism; protoporphyrin-IX biosynthesis; coproporphyrinogen-III from 5-aminolevulinate: step 2/4. Functionally, tetrapolymerization of the monopyrrole PBG into the hydroxymethylbilane pre-uroporphyrinogen in several discrete steps. The protein is Porphobilinogen deaminase of Macrococcus caseolyticus (strain JCSC5402) (Macrococcoides caseolyticum).